Here is a 491-residue protein sequence, read N- to C-terminus: Aspartyl/glutamyl-tRNA(Asn/Gln) amidotransferase subunit B (491 aa).

The protein belongs to the GatB/GatE family. GatB subfamily. Heterotrimer of A, B and C subunits.

It carries out the reaction L-glutamyl-tRNA(Gln) + L-glutamine + ATP + H2O = L-glutaminyl-tRNA(Gln) + L-glutamate + ADP + phosphate + H(+). The catalysed reaction is L-aspartyl-tRNA(Asn) + L-glutamine + ATP + H2O = L-asparaginyl-tRNA(Asn) + L-glutamate + ADP + phosphate + 2 H(+). Allows the formation of correctly charged Asn-tRNA(Asn) or Gln-tRNA(Gln) through the transamidation of misacylated Asp-tRNA(Asn) or Glu-tRNA(Gln) in organisms which lack either or both of asparaginyl-tRNA or glutaminyl-tRNA synthetases. The reaction takes place in the presence of glutamine and ATP through an activated phospho-Asp-tRNA(Asn) or phospho-Glu-tRNA(Gln). The sequence is that of Aspartyl/glutamyl-tRNA(Asn/Gln) amidotransferase subunit B from Trichormus variabilis (strain ATCC 29413 / PCC 7937) (Anabaena variabilis).